Reading from the N-terminus, the 514-residue chain is Cardiolipin synthase 2 (514 aa).

3 consecutive transmembrane segments (helical) span residues 7-27 (LIFF…FIDV), 41-61 (ILGI…CVIF), and 71-91 (LTWL…YLLF). PLD phosphodiesterase domains lie at 249–276 (INYR…GDEY) and 427–454 (EKGF…DMRS). Residues His254, Lys256, Asp261, His432, Lys434, and Asp439 contribute to the active site.

Belongs to the phospholipase D family. Cardiolipin synthase subfamily.

The protein localises to the cell membrane. It carries out the reaction 2 a 1,2-diacyl-sn-glycero-3-phospho-(1'-sn-glycerol) = a cardiolipin + glycerol. Catalyzes the reversible phosphatidyl group transfer from one phosphatidylglycerol molecule to another to form cardiolipin (CL) (diphosphatidylglycerol) and glycerol. The sequence is that of Cardiolipin synthase 2 (cls2) from Bacillus cereus (strain ATCC 14579 / DSM 31 / CCUG 7414 / JCM 2152 / NBRC 15305 / NCIMB 9373 / NCTC 2599 / NRRL B-3711).